Here is a 341-residue protein sequence, read N- to C-terminus: Glycerol-3-phosphate dehydrogenase [NAD(P)+] (341 aa).

NADPH-binding residues include Ser14, Phe15, Arg35, and Lys108. Sn-glycerol 3-phosphate-binding residues include Lys108 and Gly136. Position 140 (Ser140) interacts with NADPH. Lys191, Asp244, Ser254, Arg255, and Asn256 together coordinate sn-glycerol 3-phosphate. The Proton acceptor role is filled by Lys191. NADPH is bound at residue Arg255. NADPH is bound by residues Val279 and Glu281.

It belongs to the NAD-dependent glycerol-3-phosphate dehydrogenase family.

Its subcellular location is the cytoplasm. The enzyme catalyses sn-glycerol 3-phosphate + NAD(+) = dihydroxyacetone phosphate + NADH + H(+). It carries out the reaction sn-glycerol 3-phosphate + NADP(+) = dihydroxyacetone phosphate + NADPH + H(+). Its pathway is membrane lipid metabolism; glycerophospholipid metabolism. In terms of biological role, catalyzes the reduction of the glycolytic intermediate dihydroxyacetone phosphate (DHAP) to sn-glycerol 3-phosphate (G3P), the key precursor for phospholipid synthesis. The protein is Glycerol-3-phosphate dehydrogenase [NAD(P)+] of Pseudomonas putida (strain GB-1).